The primary structure comprises 203 residues: GTP cyclohydrolase-2 (203 aa).

Position 49-53 (49-53 (RIHSE)) interacts with GTP. C54, C65, and C67 together coordinate Zn(2+). Residues Q70, 92-94 (EGR), and T114 each bind GTP. D126 serves as the catalytic Proton acceptor. R128 (nucleophile) is an active-site residue. Residues T149 and K154 each coordinate GTP.

The protein belongs to the GTP cyclohydrolase II family. Zn(2+) is required as a cofactor.

It carries out the reaction GTP + 4 H2O = 2,5-diamino-6-hydroxy-4-(5-phosphoribosylamino)-pyrimidine + formate + 2 phosphate + 3 H(+). It functions in the pathway cofactor biosynthesis; riboflavin biosynthesis; 5-amino-6-(D-ribitylamino)uracil from GTP: step 1/4. Catalyzes the conversion of GTP to 2,5-diamino-6-ribosylamino-4(3H)-pyrimidinone 5'-phosphate (DARP), formate and pyrophosphate. The chain is GTP cyclohydrolase-2 from Shewanella sp. (strain ANA-3).